Here is an 812-residue protein sequence, read N- to C-terminus: Zn(2)-C6 fungal-type transcription factor pigI (812 aa).

Residues G42 to Q74 form a disordered region. Residues C77–C105 constitute a DNA-binding region (zn(2)-C6 fungal-type).

Its subcellular location is the nucleus. In terms of biological role, zn(2)-C6 fungal-type transcription factor; part of the gene cluster that mediates the biosynthesis of azaphilone pigments (MonAzPs), a complex mixture of compounds with a common azaphilone skeleton very widely used as food colorants. Acts probably as a negative regulator of the azaphilone pigments (MonAzPs) gene cluster. This is Zn(2)-C6 fungal-type transcription factor pigI from Monascus ruber (Mold).